We begin with the raw amino-acid sequence, 155 residues long: Ribosomal RNA large subunit methyltransferase H (155 aa).

S-adenosyl-L-methionine contacts are provided by residues Leu73, Gly104, and 123 to 128 (LSPLTL).

It belongs to the RNA methyltransferase RlmH family. In terms of assembly, homodimer.

It localises to the cytoplasm. The enzyme catalyses pseudouridine(1915) in 23S rRNA + S-adenosyl-L-methionine = N(3)-methylpseudouridine(1915) in 23S rRNA + S-adenosyl-L-homocysteine + H(+). In terms of biological role, specifically methylates the pseudouridine at position 1915 (m3Psi1915) in 23S rRNA. The chain is Ribosomal RNA large subunit methyltransferase H from Pseudomonas putida (strain GB-1).